The following is a 1003-amino-acid chain: Leucine-rich repeat receptor-like serine/threonine-protein kinase BAM1 (1003 aa).

Residues 1-19 (MKLFLLLLFLLHISHTFTA) form the signal peptide. Over 20-640 (SRPISEFRAL…HSKGPLSASM (621 aa)) the chain is Extracellular. LRR repeat units lie at residues 68 to 92 (RRHV…VSHL), 93 to 116 (RLLQ…ISSL), 117 to 140 (SGLR…ISSG), 142 to 165 (VNLR…VTNL), 166 to 191 (TQLR…SWPV), 193 to 213 (EYLA…IGNL), 215 to 238 (TLRE…IGNL), 239 to 262 (SELV…IGKL), 263 to 285 (QKLD…ELGT), 286 to 310 (LSSL…FAEL), 312 to 334 (NLTL…IGDL), 335 to 358 (PELE…LGEN), 359 to 382 (GKLN…MCSG), 385 to 406 (LETL…LGKC), 407 to 430 (ESLT…LFGL), 432 to 454 (KLTQ…GGVS), 455 to 480 (VNLG…NFTG), 482 to 502 (QKLL…VGKL), 503 to 526 (QQLS…ISRC), 527 to 550 (KLLT…ITAM), 551 to 574 (KILN…ISSM), and 575 to 598 (QSLT…GQFS). N-linked (GlcNAc...) asparagine glycans are attached at residues asparagine 80, asparagine 97, asparagine 123, asparagine 130, asparagine 153, and asparagine 164. Residues asparagine 212 and asparagine 237 are each glycosylated (N-linked (GlcNAc...) asparagine). 2 N-linked (GlcNAc...) asparagine glycosylation sites follow: asparagine 312 and asparagine 346. N-linked (GlcNAc...) asparagine glycosylation is present at asparagine 420. Asparagine 477 is a glycosylation site (N-linked (GlcNAc...) asparagine). N-linked (GlcNAc...) asparagine glycosylation is found at asparagine 557, asparagine 586, and asparagine 601. A helical transmembrane segment spans residues 641-661 (KLLLVLGLLVCSIAFAVVAII). Over 662 to 1003 (KARSLKKASE…VQSPPDLLNL (342 aa)) the chain is Cytoplasmic. At threonine 686 the chain carries Phosphothreonine. The Protein kinase domain occupies 694–971 (LKEDNIIGKG…VQILTEIPKL (278 aa)). Residues 700 to 708 (IGKGGAGIV) and lysine 722 contribute to the ATP site. Phosphotyrosine occurs at positions 769 and 807. Residue aspartate 820 is the Proton acceptor of the active site. Phosphoserine is present on serine 855. Residues tyrosine 863 and tyrosine 870 each carry the phosphotyrosine modification. Threonine 871 is modified (phosphothreonine). The segment at 969-1003 (PKLPPSKDQPMTESAPESELSPKSGVQSPPDLLNL) is disordered. Serine 996 is modified (phosphoserine).

Belongs to the protein kinase superfamily. Ser/Thr protein kinase family. Self-interacts and interacts with BAM2 and CLV1. Binds to the CLV3, CLE5, CLE11, CLE18, CLE19, CLE22, CLE25, CLE26, CLE40, CLE41 and CLE42 mature peptides, probably via its extracellular leucine-rich repeat region. Expressed in seedlings, roots, leaves, inflorescences, flowers and siliques.

Its subcellular location is the cell membrane. The enzyme catalyses L-seryl-[protein] + ATP = O-phospho-L-seryl-[protein] + ADP + H(+). It carries out the reaction L-threonyl-[protein] + ATP = O-phospho-L-threonyl-[protein] + ADP + H(+). In terms of biological role, necessary for male gametophyte development, as well as ovule specification and function. Involved in cell-cell communication process required during early anther development, and regulating cell division and differentiation to organize cell layers. Required for the development of high-ordered vascular strands within the leaf and a correlated control of leaf shape, size and symmetry. May regulate the CLV1-dependent CLV3-mediated signaling in meristems maintenance. This chain is Leucine-rich repeat receptor-like serine/threonine-protein kinase BAM1 (BAM1), found in Arabidopsis thaliana (Mouse-ear cress).